A 336-amino-acid chain; its full sequence is Izumo sperm-egg fusion protein 1 (336 aa).

The N-terminal stretch at 1–16 is a signal peptide; it reads MTLPILLGWFLTLCSS. Residues 158–247 form the Ig-like C2-type domain; it reads PPLDCGEHHL…LKDQKGTALS (90 aa). Residues Cys-179 and Cys-236 are joined by a disulfide bond. A helical transmembrane segment spans residues 287–307; it reads SFLTVLILLTVLSITGSLIII.

This sequence belongs to the Izumo family. Forms a complex with tmem81 and spaca6 on spermatocyte cell membrane. The complex binds to oocyte protein bncr. In terms of tissue distribution, expressed in sperm.

Its subcellular location is the cell membrane. It localises to the cytoplasmic vesicle. The protein resides in the secretory vesicle. It is found in the acrosome membrane. Functionally, essential sperm cell-surface protein required for fertilization by acting as a ligand for bncr receptor on egg. The interaction of the complex izumo1:spaca6:tmemt81 with bncr is a necessary adhesion event between sperm and egg that is required for fertilization. This Danio rerio (Zebrafish) protein is Izumo sperm-egg fusion protein 1.